The sequence spans 259 residues: MSSVPDIKTLPKLSNPLEDAKRLAAYRAVDENVDFQNERVIGIGSGSTVVYVAERLGQYLKDPKYTKYVSQFVCIPTGFQSRALILDNGLQLDSIDHHPIIDIAFDGADEVDVNLQLIKGGGACLFQEKLVSTSAKRFIVVADHRKQSPQYLGKNWRQGVPIEVVPSAYVRVQHDLLNKLHAQTAVVRQGGSAKAGPVVTDNNNFIIDADFGEIKDPKSLYVSIEMLIGVVEVGLFIDNAEKVYFGNADGSVNVLDKKN.

The protein belongs to the ribose 5-phosphate isomerase family.

Its subcellular location is the cytoplasm. The catalysed reaction is aldehydo-D-ribose 5-phosphate = D-ribulose 5-phosphate. Its pathway is carbohydrate degradation; pentose phosphate pathway; D-ribose 5-phosphate from D-ribulose 5-phosphate (non-oxidative stage): step 1/1. This Vanderwaltozyma polyspora (strain ATCC 22028 / DSM 70294 / BCRC 21397 / CBS 2163 / NBRC 10782 / NRRL Y-8283 / UCD 57-17) (Kluyveromyces polysporus) protein is Ribose-5-phosphate isomerase (RKI1).